Here is a 139-residue protein sequence, read N- to C-terminus: Large-conductance mechanosensitive channel (139 aa).

2 helical membrane passes run 9–29 and 79–99; these read AFAV…GAAF and IQTV…VKAI.

This sequence belongs to the MscL family. In terms of assembly, homopentamer.

Its subcellular location is the cell inner membrane. Functionally, channel that opens in response to stretch forces in the membrane lipid bilayer. May participate in the regulation of osmotic pressure changes within the cell. This Pseudomonas putida (strain GB-1) protein is Large-conductance mechanosensitive channel.